The following is a 421-amino-acid chain: CinA-like protein (421 aa).

The protein belongs to the CinA family.

The protein is CinA-like protein of Synechococcus elongatus (strain ATCC 33912 / PCC 7942 / FACHB-805) (Anacystis nidulans R2).